Consider the following 156-residue polypeptide: Transcription elongation factor GreA (156 aa).

Residues 6–75 (IYLTKEGYEK…ELENMLSKAE (70 aa)) are a coiled coil.

The protein belongs to the GreA/GreB family.

Functionally, necessary for efficient RNA polymerase transcription elongation past template-encoded arresting sites. The arresting sites in DNA have the property of trapping a certain fraction of elongating RNA polymerases that pass through, resulting in locked ternary complexes. Cleavage of the nascent transcript by cleavage factors such as GreA or GreB allows the resumption of elongation from the new 3'terminus. GreA releases sequences of 2 to 3 nucleotides. The sequence is that of Transcription elongation factor GreA from Thermosipho africanus (strain TCF52B).